The sequence spans 219 residues: Thiopurine S-methyltransferase (219 aa).

Positions 10, 45, 66, and 123 each coordinate S-adenosyl-L-methionine.

It belongs to the class I-like SAM-binding methyltransferase superfamily. TPMT family.

It localises to the cytoplasm. It catalyses the reaction S-adenosyl-L-methionine + a thiopurine = S-adenosyl-L-homocysteine + a thiopurine S-methylether.. This Marinobacter nauticus (strain ATCC 700491 / DSM 11845 / VT8) (Marinobacter aquaeolei) protein is Thiopurine S-methyltransferase.